A 576-amino-acid polypeptide reads, in one-letter code: Protein O-linked-mannose beta-1,4-N-acetylglucosaminyltransferase 2 (576 aa).

Over 1–4 the chain is Cytoplasmic; that stretch reads MNIS. Residues 5 to 25 form a helical; Signal-anchor for type II membrane protein membrane-spanning segment; it reads AVFNALLVSIMAAVLWKHVKL. At 26-576 the chain is on the lumenal side; it reads LEQFYVIEEE…PFAEVLVCNT (551 aa). N98, N275, N335, N451, N539, and N561 each carry an N-linked (GlcNAc...) asparagine glycan. The 95-residue stretch at 482 to 576 folds into the Fibronectin type-III domain; sequence RESKCQASAQ…PFAEVLVCNT (95 aa).

It belongs to the glycosyltransferase 61 family.

The protein resides in the endoplasmic reticulum membrane. The enzyme catalyses 3-O-(alpha-D-mannosyl)-L-threonyl-[protein] + UDP-N-acetyl-alpha-D-glucosamine = 3-O-(N-acetyl-beta-D-glucosaminyl-(1-&gt;4)-alpha-D-mannosyl)-L-threonyl-[protein] + UDP + H(+). Its pathway is protein modification; protein glycosylation. Functionally, O-linked mannose beta-1,4-N-acetylglucosaminyltransferase that transfers UDP-N-acetyl-D-glucosamine to the 4-position of the mannose to generate N-acetyl-D-glucosamine-beta-1,4-O-D-mannosylprotein. Involved in the biosynthesis of the phosphorylated O-mannosyl trisaccharide (N-acetylgalactosamine-beta-3-N-acetylglucosamine-beta-4-(phosphate-6-)mannose), a carbohydrate structure present in alpha-dystroglycan (DAG1), which is required for binding laminin G-like domain-containing extracellular proteins with high affinity. This chain is Protein O-linked-mannose beta-1,4-N-acetylglucosaminyltransferase 2 (pomgnt2), found in Xenopus tropicalis (Western clawed frog).